The following is a 70-amino-acid chain: DNA-directed RNA polymerase subunit omega (70 aa).

The protein belongs to the RNA polymerase subunit omega family. In terms of assembly, the RNAP catalytic core consists of 2 alpha, 1 beta, 1 beta' and 1 omega subunit. When a sigma factor is associated with the core the holoenzyme is formed, which can initiate transcription.

The catalysed reaction is RNA(n) + a ribonucleoside 5'-triphosphate = RNA(n+1) + diphosphate. In terms of biological role, promotes RNA polymerase assembly. Latches the N- and C-terminal regions of the beta' subunit thereby facilitating its interaction with the beta and alpha subunits. This chain is DNA-directed RNA polymerase subunit omega, found in Staphylococcus epidermidis (strain ATCC 35984 / DSM 28319 / BCRC 17069 / CCUG 31568 / BM 3577 / RP62A).